Here is a 97-residue protein sequence, read N- to C-terminus: MSSAPEPPTFKKEPPKEKEFQSPGLRGVRTTTLFRAVNPELFIKPNKPVMAFGLVTLSLCVAYIGYLHAIQENKKDLYEAIDSEGHSYMRRKTSKWD.

The interval 1–24 (MSSAPEPPTFKKEPPKEKEFQSPG) is disordered. Residues 9–20 (TFKKEPPKEKEF) are compositionally biased toward basic and acidic residues. Residues 48–70 (PVMAFGLVTLSLCVAYIGYLHAI) form a helical membrane-spanning segment.

Belongs to the SMIM8 family.

It is found in the membrane. The chain is Small integral membrane protein 8 (SMIM8) from Homo sapiens (Human).